Reading from the N-terminus, the 174-residue chain is Acetolactate synthase small subunit (174 aa).

In terms of domain architecture, ACT spans 4 to 78; sequence TLSVLVQDEA…NILNVQDVTN (75 aa).

Belongs to the acetolactate synthase small subunit family. Dimer of large and small chains.

It localises to the plastid. Its subcellular location is the chloroplast. It catalyses the reaction 2 pyruvate + H(+) = (2S)-2-acetolactate + CO2. It functions in the pathway amino-acid biosynthesis; L-isoleucine biosynthesis; L-isoleucine from 2-oxobutanoate: step 1/4. It participates in amino-acid biosynthesis; L-valine biosynthesis; L-valine from pyruvate: step 1/4. This is Acetolactate synthase small subunit (ilvH) from Pyropia yezoensis (Susabi-nori).